Consider the following 313-residue polypeptide: Syndecan-1 (313 aa).

Positions 1–22 (MRRAALWLWLCALALRLQPALP) are cleaved as a signal peptide. The Extracellular segment spans residues 23–257 (QIVTANVPPE…GLLDRKEVLG (235 aa)). Disordered regions lie at residues 27 to 58 (ANVP…MTLS) and 95 to 186 (AGEK…VEDG). The segment covering 32-42 (EDQDGSGDDSD) has biased composition (acidic residues). O-linked (Xyl...) (chondroitin sulfate) serine glycosylation is present at serine 37. A glycan (N-linked (GlcNAc...) asparagine) is linked at asparagine 43. Residues serine 45 and serine 47 are each glycosylated (O-linked (Xyl...) (heparan sulfate) serine). Residues 97-129 (EKPEEGEPVAHVEAEPDFTARDKEKEATTRPRE) are compositionally biased toward basic and acidic residues. Positions 135–154 (VTQQASTAARATTAQASVTS) are enriched in low complexity. O-linked (Xyl...) (chondroitin sulfate) serine glycosylation is found at serine 209 and serine 219. A helical transmembrane segment spans residues 258 to 278 (GVIAGGLVGLIFAVCLVAFML). At 279 to 313 (YRMKKKDEGSYSLEEPKQANGGAYQKPTKQEEFYA) the chain is on the cytoplasmic side. The segment covering 286–295 (EGSYSLEEPK) has biased composition (basic and acidic residues). The segment at 286–313 (EGSYSLEEPKQANGGAYQKPTKQEEFYA) is disordered. Serine 288 is modified (phosphoserine).

It belongs to the syndecan proteoglycan family. As to quaternary structure, interacts with CDCP1. Interacts (via C-terminus) with TIAM1 (via PDZ domain). Interacts with MDK. Shedding is enhanced by a number of factors such as heparanase, thrombin or EGF. Also by stress and wound healing. PMA-mediated shedding is inhibited by TIMP3.

The protein resides in the membrane. Its subcellular location is the secreted. It is found in the extracellular exosome. Its function is as follows. Cell surface proteoglycan that contains both heparan sulfate and chondroitin sulfate and that links the cytoskeleton to the interstitial matrix. Regulates exosome biogenesis in concert with SDCBP and PDCD6IP. Able to induce its own expression in dental mesenchymal cells and also in the neighboring dental epithelial cells via an MSX1-mediated pathway. This Rattus norvegicus (Rat) protein is Syndecan-1.